The sequence spans 222 residues: UPF0758 protein Cpar_0627 (222 aa).

The region spanning 100–222 (KIQGAQDVFE…WFSFRDHSLL (123 aa)) is the MPN domain. Zn(2+) contacts are provided by His171, His173, and Asp184. Positions 171–184 (HNHPSGDVQPSNAD) match the JAMM motif motif.

Belongs to the UPF0758 family.

This Chlorobaculum parvum (strain DSM 263 / NCIMB 8327) (Chlorobium vibrioforme subsp. thiosulfatophilum) protein is UPF0758 protein Cpar_0627.